A 474-amino-acid polypeptide reads, in one-letter code: Aspartic-type endopeptidase ctsD (474 aa).

Residues 1–19 (MHLLQCLLSTISLASTVTA) form the signal peptide. One can recognise a Peptidase A1 domain in the interval 106–413 (YFATVRVGSQ…DYDNHRIGFA (308 aa)). D124 is an active-site residue. 4 N-linked (GlcNAc...) asparagine glycosylation sites follow: N189, N197, N275, and N301. The active site involves D307. N-linked (GlcNAc...) asparagine glycosylation is found at N338, N344, and N414. The GPI-anchor amidated serine moiety is linked to residue S452. Positions 453–474 (ASIVSRFVHWPFIFALLCMVLV) are cleaved as a propeptide — removed in mature form.

This sequence belongs to the peptidase A1 family.

It localises to the cell membrane. Secreted aspartic-type endopeptidase which is secreted and contributes to virulence. The protein is Aspartic-type endopeptidase ctsD (ctsD) of Aspergillus fumigatus (strain ATCC MYA-4609 / CBS 101355 / FGSC A1100 / Af293) (Neosartorya fumigata).